Reading from the N-terminus, the 524-residue chain is Vang-like protein 1 (524 aa).

A compositionally biased stretch (low complexity) spans 1 to 15 (MDTESTYSGYSYYSS). The segment at 1–85 (MDTESTYSGY…TTAITGTSEH (85 aa)) is disordered. Residues 1 to 117 (MDTESTYSGY…KRYLGLTVAS (117 aa)) are Cytoplasmic-facing. The segment covering 73–85 (GETTTAITGTSEH) has biased composition (polar residues). A phosphoserine mark is found at serine 86 and serine 88. The chain crosses the membrane as a helical span at residues 118–138 (FLGLLVFLTPIAFILLPPILW). Over 139–151 (RDELEPCGTICEG) the chain is Extracellular. The helical transmembrane segment at 152-172 (LFISMAFKLLILLIGTWALFF) threads the bilayer. Over 173-182 (RKRRADMPRV) the chain is Cytoplasmic. A helical membrane pass occupies residues 183–203 (FVFRALLLVLIFLFVVSYWLF). Residues 204 to 222 (YGVRILDSRDRNYQGIVQY) are Extracellular-facing. The chain crosses the membrane as a helical span at residues 223 to 243 (AVSLVDALLFIHYLAIVLLEL). Residues 244–524 (RQLQPMFTLQ…VLRLQSETSV (281 aa)) are Cytoplasmic-facing.

This sequence belongs to the Vang family. Heterodimer with VANGL2. Interacts through its C-terminal region with the N-terminal half of DVL1, DVL2 and DVL3. The PDZ domain of DVL1, DVL2 and DVL3 is required for the interaction. As to expression, according to PubMed:11956595, ubiquitously expressed. According to PubMed:12011995, expressed specifically in testis and ovary.

The protein resides in the cell membrane. This is Vang-like protein 1 (VANGL1) from Homo sapiens (Human).